The chain runs to 392 residues: Formate-dependent phosphoribosylglycinamide formyltransferase (392 aa).

N(1)-(5-phospho-beta-D-ribosyl)glycinamide-binding positions include 22-23 and glutamate 82; that span reads EL. Residues arginine 114, lysine 155, 160-165, 195-198, and glutamate 203 contribute to the ATP site; these read SSGKGQ and EGVV. The 190-residue stretch at 119–308 folds into the ATP-grasp domain; sequence RLAAEELGLP…EFALHVRAFL (190 aa). 2 residues coordinate Mg(2+): glutamate 267 and glutamate 279. Residues aspartate 286, lysine 355, and 362 to 363 contribute to the N(1)-(5-phospho-beta-D-ribosyl)glycinamide site; that span reads RR.

This sequence belongs to the PurK/PurT family. As to quaternary structure, homodimer.

The enzyme catalyses N(1)-(5-phospho-beta-D-ribosyl)glycinamide + formate + ATP = N(2)-formyl-N(1)-(5-phospho-beta-D-ribosyl)glycinamide + ADP + phosphate + H(+). The protein operates within purine metabolism; IMP biosynthesis via de novo pathway; N(2)-formyl-N(1)-(5-phospho-D-ribosyl)glycinamide from N(1)-(5-phospho-D-ribosyl)glycinamide (formate route): step 1/1. Involved in the de novo purine biosynthesis. Catalyzes the transfer of formate to 5-phospho-ribosyl-glycinamide (GAR), producing 5-phospho-ribosyl-N-formylglycinamide (FGAR). Formate is provided by PurU via hydrolysis of 10-formyl-tetrahydrofolate. This chain is Formate-dependent phosphoribosylglycinamide formyltransferase, found in Salmonella arizonae (strain ATCC BAA-731 / CDC346-86 / RSK2980).